The sequence spans 214 residues: uncharacterized protein (214 aa).

The signal sequence occupies residues 1–17 (MWCFIVFLTIFLPTLEG). N-linked (GlcNAc...) asparagine glycans are attached at residues N88 and N139.

Component of the acid-insoluble organic matrix of calcified layers of the shell (at protein level).

It is found in the secreted. This is an uncharacterized protein from Lottia gigantea (Giant owl limpet).